A 320-amino-acid polypeptide reads, in one-letter code: Heterogeneous nuclear ribonucleoprotein A1-like 2 (320 aa).

The tract at residues 4-94 (SASPKEPEQL…EPKRAVSRED (91 aa)) is globular A domain. Residues S6 and S22 each carry the phosphoserine modification. RRM domains follow at residues 14–97 (RKLF…DSQR) and 105–184 (KKIF…LPKQ). Residues 95–185 (SQRPGAHLTV…EVRKALPKQE (91 aa)) form a globular B domain region. The segment at 181–216 (LPKQEMASASSSQRGRRGSGNFGGGRGDGFGGNDNF) is disordered. 4 positions are modified to asymmetric dimethylarginine; alternate: R194, R206, R218, and R225. Residues R194, R206, R218, and R225 each carry the omega-N-methylarginine; alternate modification. Gly residues predominate over residues 198–216 (GSGNFGGGRGDGFGGNDNF). The interval 218 to 240 (RGGNFSGRGGFGGSCGGGGYGGS) is RNA-binding RGG-box. The tract at residues 268–305 (NQSSNFGPMKGGNFGGRSSGPYGGGGQYFAKPQNQGGY) is nuclear targeting sequence. The disordered stretch occupies residues 271–320 (SNFGPMKGGNFGGRSSGPYGGGGQYFAKPQNQGGYGVSSSSSSYGSGRRF). Positions 276–294 (MKGGNFGGRSSGPYGGGGQ) are enriched in gly residues. R284 carries the post-translational modification Omega-N-methylarginine. K298 is modified (N6-acetyllysine). Low complexity predominate over residues 307–320 (VSSSSSSYGSGRRF).

The protein localises to the nucleus. It localises to the cytoplasm. Its function is as follows. Involved in the packaging of pre-mRNA into hnRNP particles, transport of poly(A) mRNA from the nucleus to the cytoplasm and may modulate splice site selection. In Homo sapiens (Human), this protein is Heterogeneous nuclear ribonucleoprotein A1-like 2 (HNRNPA1L2).